A 316-amino-acid chain; its full sequence is Putative S-adenosyl-L-methionine-dependent methyltransferase MAB_4606c (316 aa).

Residues Asp-137 and 166 to 167 contribute to the S-adenosyl-L-methionine site; that span reads DL.

This sequence belongs to the UPF0677 family.

Functionally, exhibits S-adenosyl-L-methionine-dependent methyltransferase activity. In Mycobacteroides abscessus (strain ATCC 19977 / DSM 44196 / CCUG 20993 / CIP 104536 / JCM 13569 / NCTC 13031 / TMC 1543 / L948) (Mycobacterium abscessus), this protein is Putative S-adenosyl-L-methionine-dependent methyltransferase MAB_4606c.